The sequence spans 277 residues: Orotidine 5'-phosphate decarboxylase (277 aa).

The active-site Proton donor is K95.

It belongs to the OMP decarboxylase family. Type 2 subfamily.

The catalysed reaction is orotidine 5'-phosphate + H(+) = UMP + CO2. It functions in the pathway pyrimidine metabolism; UMP biosynthesis via de novo pathway; UMP from orotate: step 2/2. The sequence is that of Orotidine 5'-phosphate decarboxylase from Mycolicibacterium vanbaalenii (strain DSM 7251 / JCM 13017 / BCRC 16820 / KCTC 9966 / NRRL B-24157 / PYR-1) (Mycobacterium vanbaalenii).